A 452-amino-acid chain; its full sequence is Cell division protein FtsZ (452 aa).

GTP is bound by residues 24–28, 111–113, Glu142, Arg146, and Asp190; these read GAGSN and GTG.

Belongs to the FtsZ family. Homodimer. Polymerizes to form a dynamic ring structure in a strictly GTP-dependent manner. Interacts directly with several other division proteins.

It is found in the cytoplasm. Its function is as follows. Essential cell division protein that forms a contractile ring structure (Z ring) at the future cell division site. The regulation of the ring assembly controls the timing and the location of cell division. One of the functions of the FtsZ ring is to recruit other cell division proteins to the septum to produce a new cell wall between the dividing cells. Binds GTP and shows GTPase activity. The sequence is that of Cell division protein FtsZ from Rickettsia felis (strain ATCC VR-1525 / URRWXCal2) (Rickettsia azadi).